The chain runs to 1406 residues: DNA-directed RNA polymerase subunit beta' (1406 aa).

The Zn(2+) site is built by Cys72, Cys74, Cys87, and Cys90. 3 residues coordinate Mg(2+): Asp462, Asp464, and Asp466. Zn(2+) is bound by residues Cys816, Cys891, Cys898, and Cys901.

It belongs to the RNA polymerase beta' chain family. The RNAP catalytic core consists of 2 alpha, 1 beta, 1 beta' and 1 omega subunit. When a sigma factor is associated with the core the holoenzyme is formed, which can initiate transcription. Requires Mg(2+) as cofactor. Zn(2+) serves as cofactor.

The catalysed reaction is RNA(n) + a ribonucleoside 5'-triphosphate = RNA(n+1) + diphosphate. In terms of biological role, DNA-dependent RNA polymerase catalyzes the transcription of DNA into RNA using the four ribonucleoside triphosphates as substrates. This chain is DNA-directed RNA polymerase subunit beta', found in Psychrobacter arcticus (strain DSM 17307 / VKM B-2377 / 273-4).